A 341-amino-acid polypeptide reads, in one-letter code: CRISPR-associated endonuclease Cas1 (341 aa).

3 residues coordinate Mn(2+): Glu173, His242, and Glu257.

This sequence belongs to the CRISPR-associated endonuclease Cas1 family. As to quaternary structure, homodimer, forms a heterotetramer with a Cas2 homodimer. The cofactor is Mg(2+). Mn(2+) serves as cofactor.

Its function is as follows. CRISPR (clustered regularly interspaced short palindromic repeat), is an adaptive immune system that provides protection against mobile genetic elements (viruses, transposable elements and conjugative plasmids). CRISPR clusters contain spacers, sequences complementary to antecedent mobile elements, and target invading nucleic acids. CRISPR clusters are transcribed and processed into CRISPR RNA (crRNA). Acts as a dsDNA endonuclease. Involved in the integration of spacer DNA into the CRISPR cassette. This Korarchaeum cryptofilum (strain OPF8) protein is CRISPR-associated endonuclease Cas1.